The chain runs to 68 residues: Antimicrobial peptide Eval418 (68 aa).

An N-terminal signal peptide occupies residues M1–A23. I36 is subject to Isoleucine amide. The propeptide occupies G37–R68.

It belongs to the non-disulfide-bridged peptide (NDBP) superfamily. Short antimicrobial peptide (group 4) family. Expressed by the venom gland.

The protein localises to the secreted. Probable antimicrobial peptide. Shows dose-dependent and time-dependent inactivation of herpes simplex virus type 1 (HSV-1) and dose-dependent inhibition of HSV-1 viral attachment to host cells. Scarcely suppress an established HSV-1 infection due to poor cellular uptake. The protein is Antimicrobial peptide Eval418 of Euscorpiops validus (Scorpion).